The sequence spans 204 residues: MPQHPKHMKSLGHLMALQRPTVWVDHFPVLEQLGEPPNPDKTLMVDIGGGFGQQSKALRSRCPNVEGKIIVQDMPQTLASAEPAEGVEFSEHDFFQPQPVKGAKFYYLRHVLHDWPDEQCVQILQQVIPAMAPESRILIDEVVIPVTGVPWQAAFMDLLMMESFASIERTRAEWEALMDKAGLKIIEEYYYDGKEQAILVVIPK.

S-adenosyl-L-methionine contacts are provided by residues G48–G49, D73, D93–F94, and R109. The active-site Proton acceptor is H113.

This sequence belongs to the class I-like SAM-binding methyltransferase superfamily. Cation-independent O-methyltransferase family.

It catalyses the reaction 6-demethylsterigmatocystin + S-adenosyl-L-methionine = sterigmatocystin + S-adenosyl-L-homocysteine + H(+). The protein operates within mycotoxin biosynthesis; sterigmatocystin biosynthesis. Functionally, norsolorinic acid reductase; part of the gene cluster that mediates the biosynthesis of sterigmatocystin (ST), a polyketide-derived furanocoumarin which is part of the most toxic and carcinogenic compounds among the known mycotoxins. The first step in the biosynthesis of sterigmatocystin is the production of hexanoate by the fatty acid synthase (FAS) units stcJ and stcK. The polyketide backbone is assembled by the non-reducing polyketide synthase stcA by condensation of the starter hexanoyl-CoA and 7 malonyl-CoA extender units followed by cyclization and release of norsolorinic acid. Norsolorinic acid is the first stable intermediate in the biosynthesis of sterigmatocystin and is converted into averantin (AVN) by the ketoreductase stcE which reduces the hexanoate ketone to an alcohol. Averantin is then oxidized into 5'-hydroxyaverantin (HAVN) by the cytochrome P450 monooxygenase stcF. 5'-hydroxyaverantin is further converted to 5'-oxyaverantin (OAVN) by the 5'-hydroxyaverantin dehydrogenase stcG. The next step is the conversion of OAVN into averufin (AVF) which is catalyzed by a yet to be identified enzyme. The cytochrome P450 monooxygenase stcB and the flavin-binding monooxygenase stcW are both required for the conversion of averufin to 1-hydroxyversicolorone. The esterase stcI probably catalyzes the formation of versiconal hemiacetal acetate from 1-hydroxyversicolorone. The oxydoreductase stcN then probably catalyzes the biosynthetic step from versiconal to versicolorin B (VERB). The next step is performed by the versicolorin B desaturase stcL to produce versicolorin A (VERA). The ketoreductase stcU and the cytochrome P450 monooxygenase stcS are involved in the conversion of versicolorin A to demethylsterigmatocystin. The Baeyer-Villiger oxidas stcQ and the reductase stcR might be involved in the biosynthetic step from versicolorin A to demethylsterigmatocystin. The final step in the biosynthesis of sterigmatocystin is the methylation of demethylsterigmatocystin catalyzed by the methyltransferase stcP. This Emericella nidulans (strain FGSC A4 / ATCC 38163 / CBS 112.46 / NRRL 194 / M139) (Aspergillus nidulans) protein is Demethylsterigmatocystin 6-O-methyltransferase stcP.